The primary structure comprises 1049 residues: Probable ATP-dependent permease (1049 aa).

Residues Met1 to Ala25 form the signal peptide. At Lys26–Lys324 the chain is on the lumenal side. 4 N-linked (GlcNAc...) asparagine glycosylation sites follow: Asn50, Asn114, Asn165, and Asn221. Residues Leu325–Ile345 traverse the membrane as a helical segment. At Ser346–Lys463 the chain is on the cytoplasmic side. Positions Leu384–Asp631 constitute an ABC transporter domain. Position 423-430 (Gly423–Thr430) interacts with ATP. The helical transmembrane segment at Ile464 to Phe481 threads the bilayer. Residues Glu482–Lys793 lie on the Lumenal side of the membrane. Phosphoserine occurs at positions 659 and 702. In terms of domain architecture, ABC transmembrane type-2 spans Lys793 to Ile1044. A helical membrane pass occupies residues Leu794–Tyr814. The Cytoplasmic segment spans residues Asn815–Gly828. The helical transmembrane segment at Leu829–Ala849 threads the bilayer. Residues Leu850 to Glu877 lie on the Lumenal side of the membrane. A helical membrane pass occupies residues Val878 to Gly898. Over Leu899–Cys909 the chain is Cytoplasmic. A helical membrane pass occupies residues Ile910–Ile930. Residues Phe931 to Ser937 are Lumenal-facing. An N-linked (GlcNAc...) asparagine glycan is attached at Asn935. Residues Ile938–Thr958 traverse the membrane as a helical segment. Residues Lys959–Asn1000 lie on the Cytoplasmic side of the membrane. Residues Ile1001–Phe1021 traverse the membrane as a helical segment. At Asp1022–Lys1024 the chain is on the lumenal side. A helical membrane pass occupies residues Ile1025–Val1045. Residues Val1046 to Lys1049 lie on the Cytoplasmic side of the membrane.

Belongs to the ABC transporter superfamily. ABCG family. Eye pigment precursor importer (TC 3.A.1.204) subfamily.

It is found in the endoplasmic reticulum membrane. This Saccharomyces cerevisiae (strain ATCC 204508 / S288c) (Baker's yeast) protein is Probable ATP-dependent permease (ADP1).